A 173-amino-acid polypeptide reads, in one-letter code: Alpha-crystallin A chain (173 aa).

Methionine 1 carries the post-translational modification N-acetylmethionine. Residues 1 to 63 are required for complex formation with BFSP1 and BFSP2; sequence MDIAIQHPWF…RTVLDSGISE (63 aa). Position 6 is a deamidated glutamine; partial (glutamine 6). At serine 45 the chain carries Phosphoserine. Deamidated glutamine; partial is present on glutamine 50. Positions 52-162 constitute a sHSP domain; sequence LFRTVLDSGI…GHSERAIPVS (111 aa). Lysine 70 is modified (N6-acetyllysine). The residue at position 90 (glutamine 90) is a Deamidated glutamine; partial. An N6-acetyllysine modification is found at lysine 99. Histidine 100 is a binding site for Zn(2+). Asparagine 101 carries the post-translational modification Deamidated asparagine; partial. The Zn(2+) site is built by glutamate 102 and histidine 107. A Phosphoserine modification is found at serine 122. Position 123 is a deamidated asparagine; partial (asparagine 123). The interval 144–173 is disordered; sequence PKVPSGMDAGHSERAIPVSREEKPSSAPSS. The segment covering 153–167 has biased composition (basic and acidic residues); sequence GHSERAIPVSREEKP. Zn(2+) is bound at residue histidine 154. O-linked (GlcNAc) serine glycosylation occurs at serine 162.

This sequence belongs to the small heat shock protein (HSP20) family. Heteromer composed of three CRYAA and one CRYAB subunits. Inter-subunit bridging via zinc ions enhances stability, which is crucial as there is no protein turn over in the lens. Can also form homodimers and homotetramers (dimers of dimers) which serve as the building blocks of homooligomers. Within homooligomers, the zinc-binding motif is created from residues of 3 different molecules. His-100 and Glu-102 from one molecule are ligands of the zinc ion, and His-107 and His-154 residues from additional molecules complete the site with tetrahedral coordination geometry. Part of a complex required for lens intermediate filament formation composed of BFSP1, BFSP2 and CRYAA. Post-translationally, acetylation at Lys-70 may increase chaperone activity. Undergoes age-dependent proteolytical cleavage at the C-terminus.

The protein localises to the cytoplasm. It is found in the nucleus. Contributes to the transparency and refractive index of the lens. Acts as a chaperone, preventing aggregation of various proteins under a wide range of stress conditions. Required for the correct formation of lens intermediate filaments as part of a complex composed of BFSP1, BFSP2 and CRYAA. This Balaenoptera acutorostrata (Common minke whale) protein is Alpha-crystallin A chain (CRYAA).